The chain runs to 409 residues: Gamma-glutamyl phosphate reductase (409 aa).

This sequence belongs to the gamma-glutamyl phosphate reductase family.

Its subcellular location is the cytoplasm. It catalyses the reaction L-glutamate 5-semialdehyde + phosphate + NADP(+) = L-glutamyl 5-phosphate + NADPH + H(+). It functions in the pathway amino-acid biosynthesis; L-proline biosynthesis; L-glutamate 5-semialdehyde from L-glutamate: step 2/2. Catalyzes the NADPH-dependent reduction of L-glutamate 5-phosphate into L-glutamate 5-semialdehyde and phosphate. The product spontaneously undergoes cyclization to form 1-pyrroline-5-carboxylate. The protein is Gamma-glutamyl phosphate reductase of Mycobacterium leprae (strain TN).